The sequence spans 944 residues: Valine--tRNA ligase (944 aa).

Residues 43 to 53 (PNVTGTLHMGH) carry the 'HIGH' region motif. Positions 550 to 554 (KMSKS) match the 'KMSKS' region motif. K553 is a binding site for ATP. Positions 878-942 (LVDMDAERTR…QLTGLREQRA (65 aa)) form a coiled coil.

Belongs to the class-I aminoacyl-tRNA synthetase family. ValS type 1 subfamily. In terms of assembly, monomer.

Its subcellular location is the cytoplasm. It catalyses the reaction tRNA(Val) + L-valine + ATP = L-valyl-tRNA(Val) + AMP + diphosphate. Catalyzes the attachment of valine to tRNA(Val). As ValRS can inadvertently accommodate and process structurally similar amino acids such as threonine, to avoid such errors, it has a 'posttransfer' editing activity that hydrolyzes mischarged Thr-tRNA(Val) in a tRNA-dependent manner. This is Valine--tRNA ligase from Xanthomonas axonopodis pv. citri (strain 306).